We begin with the raw amino-acid sequence, 306 residues long: Recombination-associated protein RdgC (306 aa).

The protein belongs to the RdgC family.

Its subcellular location is the cytoplasm. The protein resides in the nucleoid. Its function is as follows. May be involved in recombination. This chain is Recombination-associated protein RdgC, found in Burkholderia ambifaria (strain MC40-6).